A 345-amino-acid chain; its full sequence is Fructose-1,6-bisphosphatase class 1 (345 aa).

Residues E90, D109, L111, and D112 each coordinate Mg(2+). Substrate is bound by residues 112–115 (DGSS) and N199. Mg(2+) is bound at residue E271.

Belongs to the FBPase class 1 family. Homotetramer. The cofactor is Mg(2+).

The protein localises to the cytoplasm. It carries out the reaction beta-D-fructose 1,6-bisphosphate + H2O = beta-D-fructose 6-phosphate + phosphate. The protein operates within carbohydrate biosynthesis; Calvin cycle. The protein is Fructose-1,6-bisphosphatase class 1 of Rhodopseudomonas palustris (strain BisB5).